A 943-amino-acid polypeptide reads, in one-letter code: Isoleucine--tRNA ligase (943 aa).

The 'HIGH' region motif lies at P58–H68. E567 contacts L-isoleucyl-5'-AMP. The 'KMSKS' region signature appears at K608–S612. K611 is a binding site for ATP. 4 residues coordinate Zn(2+): C906, C909, C926, and C929.

The protein belongs to the class-I aminoacyl-tRNA synthetase family. IleS type 1 subfamily. Monomer. Zn(2+) is required as a cofactor.

Its subcellular location is the cytoplasm. It carries out the reaction tRNA(Ile) + L-isoleucine + ATP = L-isoleucyl-tRNA(Ile) + AMP + diphosphate. In terms of biological role, catalyzes the attachment of isoleucine to tRNA(Ile). As IleRS can inadvertently accommodate and process structurally similar amino acids such as valine, to avoid such errors it has two additional distinct tRNA(Ile)-dependent editing activities. One activity is designated as 'pretransfer' editing and involves the hydrolysis of activated Val-AMP. The other activity is designated 'posttransfer' editing and involves deacylation of mischarged Val-tRNA(Ile). This Pseudomonas putida (strain GB-1) protein is Isoleucine--tRNA ligase.